The chain runs to 266 residues: Thymidylate synthase (266 aa).

Arg24 is a binding site for dUMP. His54 provides a ligand contact to (6R)-5,10-methylene-5,6,7,8-tetrahydrofolate. DUMP is bound at residue Arg129–Arg130. The active-site Nucleophile is the Cys149. DUMP is bound by residues Arg169–Asp172, Asn180, and His210–Tyr212. Position 172 (Asp172) interacts with (6R)-5,10-methylene-5,6,7,8-tetrahydrofolate. Ala265 provides a ligand contact to (6R)-5,10-methylene-5,6,7,8-tetrahydrofolate.

This sequence belongs to the thymidylate synthase family. Bacterial-type ThyA subfamily. Homodimer.

The protein localises to the cytoplasm. It catalyses the reaction dUMP + (6R)-5,10-methylene-5,6,7,8-tetrahydrofolate = 7,8-dihydrofolate + dTMP. It functions in the pathway pyrimidine metabolism; dTTP biosynthesis. In terms of biological role, catalyzes the reductive methylation of 2'-deoxyuridine-5'-monophosphate (dUMP) to 2'-deoxythymidine-5'-monophosphate (dTMP) while utilizing 5,10-methylenetetrahydrofolate (mTHF) as the methyl donor and reductant in the reaction, yielding dihydrofolate (DHF) as a by-product. This enzymatic reaction provides an intracellular de novo source of dTMP, an essential precursor for DNA biosynthesis. In Mycobacterium bovis (strain ATCC BAA-935 / AF2122/97), this protein is Thymidylate synthase.